The chain runs to 309 residues: Malate dehydrogenase (309 aa).

Residues 9-14 (GAGFVG) and Asp-33 each bind NAD(+). The substrate site is built by Arg-82 and Arg-88. Residues Asn-95 and 118-120 (VNN) each bind NAD(+). Residues Asn-120 and Arg-151 each coordinate substrate. His-175 serves as the catalytic Proton acceptor.

It belongs to the LDH/MDH superfamily. MDH type 3 family. Homotetramer (active enzyme); homodimer and homotrimer at temperatures lower than 55 degrees Celsius (inactive forms).

It catalyses the reaction (S)-malate + NAD(+) = oxaloacetate + NADH + H(+). Functionally, catalyzes the reversible oxidation of malate to oxaloacetate. This is Malate dehydrogenase from Chloroflexus aurantiacus (strain ATCC 29366 / DSM 635 / J-10-fl).